Consider the following 468-residue polypeptide: Cysteine--tRNA ligase (468 aa).

Residue Cys-33 coordinates Zn(2+). Residues 35-45 carry the 'HIGH' region motif; that stretch reads ATVQGLPHIGH. 3 residues coordinate Zn(2+): Cys-211, His-236, and Glu-240. A 'KMSKS' region motif is present at residues 267–271; the sequence is KMSKS. Lys-270 is a binding site for ATP.

Belongs to the class-I aminoacyl-tRNA synthetase family. Monomer. Zn(2+) is required as a cofactor.

The protein localises to the cytoplasm. It catalyses the reaction tRNA(Cys) + L-cysteine + ATP = L-cysteinyl-tRNA(Cys) + AMP + diphosphate. The sequence is that of Cysteine--tRNA ligase from Mycobacterium avium (strain 104).